Consider the following 392-residue polypeptide: MERVVERVAVTGAEAVANAMRQIEPDVVAAYPITPQTPIVEYFARFVADGVVRTEMIPVESEHSAMSAVVGAAAAGARAMTATSANGLALMHEIVYIAASYRLPIVMPVVNRALSGPINIHCDHSDAMAERDSGWIQLFAETNQEAYDFTILAVRLAEHEDVRLPVMVNLDGFILSHGVEPVEFYPDELVKKFVGELKPMYPLLDTEHPVTWGPLDLYDYYFEHKRQQIEAMENVKKVFPEIAKEFEETFGRKYWFVEPYRMEDAEHVMVALGSTNSTIKYVVDELREEGYKVGSLKIWMFRPFPKEQLQELLNGRKSVVVLDRAVSFGAEAPLYEAVKSALYEVAARPMLGSYVYGLGGRDIKPEHIRKAFEDAINGNLIADEQRYLGLRE.

As to quaternary structure, heterotetramer of one alpha, one beta, one delta and one gamma chain.

It carries out the reaction 2 oxidized [2Fe-2S]-[ferredoxin] + pyruvate + CoA = 2 reduced [2Fe-2S]-[ferredoxin] + acetyl-CoA + CO2 + H(+). The polypeptide is Pyruvate synthase subunit PorA (porA) (Thermotoga maritima (strain ATCC 43589 / DSM 3109 / JCM 10099 / NBRC 100826 / MSB8)).